Reading from the N-terminus, the 400-residue chain is Protein phyllopod (400 aa).

The tract at residues 109-127 (QERTKLRPVAMVRPTVRVQ) is interaction with sina. The disordered stretch occupies residues 125–145 (RVQPQSQPQLQPQVPINPTPA). Residues 127–138 (QPQSQPQLQPQV) show a composition bias toward low complexity. The interaction with ttk stretch occupies residues 241 to 320 (YQRFPQPSVD…TAISEVLPTA (80 aa)). A coiled-coil region spans residues 319-362 (TARYQVTHEENKENQQAQEMELELEEEEEVDGRAELEVVQEAEA). Residues 346 to 382 (EEVDGRAELEVVQEAEAPLEPQSHHKQGNSHQNSHQA) are disordered.

In terms of assembly, component of some E3 complex at least composed of sina, ebi and phyl, required for the degradation of ttk. In embryos, it is ubiquitously present before cellularization. During stages 9-11, it is expressed in neuroblasts and the SOP cells. From stage 12 onward, it decreases, but remains in a subset of PNS cells at stages 12-14. Weakly expressed in wing imaginal disks, in the SOP cells of wing margin bristles, notal macrochaetes, and other sensory organs. In leg disks, it is expressed in the precursors of the femoral chordotonal organs, as well as in external sensory SOP cells. Strongly expressed in the eye-antenna disk, it is specifically expressed in R1, R6 and R7 cells, and not in R3, R3, R4, R5 and R8 cells.

It is found in the nucleus. In terms of biological role, essential adapter component of E3 ubiquitin ligase complexes; involved in R7 photoreceptor cell differentiation, embryonic nervous system, external sensory organ development and specification of particular muscles. E3 ubiquitin ligase complexes mediate ubiquitination and subsequent proteasomal degradation of target proteins. Required for specification of R7 photoreceptor cell fate in the eye by participating in the ubiquitination and subsequent proteasomal degradation of Tramtrack (ttk), a general inhibitor of photoreceptor differentiation. Acts downstream of Notch signaling to specify the fate of the SOP (sensory organ precursor) cells and their progeny, probably via the sina-mediated proteasomal degradation of ttk. Its restricted pattern of expression, upon Notch and Ras signaling pathways, suggests that it acts as a key determinant in E3 complexes to trigger protein proteolysis in appropriate cells. The sequence is that of Protein phyllopod (phyl) from Drosophila melanogaster (Fruit fly).